A 239-amino-acid chain; its full sequence is Purine nucleoside phosphorylase DeoD-type (239 aa).

An a purine D-ribonucleoside-binding site is contributed by H5. Residues G21, R25, R44, and 88 to 91 each bind phosphate; that span reads RVGS. A purine D-ribonucleoside is bound by residues 180-182 and 204-205; these read EME and SD. D205 functions as the Proton donor in the catalytic mechanism.

It belongs to the PNP/UDP phosphorylase family. In terms of assembly, homohexamer; trimer of homodimers.

It carries out the reaction a purine D-ribonucleoside + phosphate = a purine nucleobase + alpha-D-ribose 1-phosphate. The enzyme catalyses a purine 2'-deoxy-D-ribonucleoside + phosphate = a purine nucleobase + 2-deoxy-alpha-D-ribose 1-phosphate. In terms of biological role, catalyzes the reversible phosphorolytic breakdown of the N-glycosidic bond in the beta-(deoxy)ribonucleoside molecules, with the formation of the corresponding free purine bases and pentose-1-phosphate. The polypeptide is Purine nucleoside phosphorylase DeoD-type (Yersinia pestis bv. Antiqua (strain Antiqua)).